The primary structure comprises 341 residues: Mediator of RNA polymerase II transcription subunit 18 (341 aa).

A disordered region spans residues 139–216; sequence KVMDKEKVQS…KEHSEGNASQ (78 aa). Residues 163–211 show a composition bias toward basic and acidic residues; it reads EDKKENIKKEESGEEVKGSGEEVKGSGEEVKGSGEEAKKSGEEAKEHSE.

This sequence belongs to the Mediator complex subunit 18 family. Component of the Mediator complex.

It is found in the nucleus. Its function is as follows. Component of the Mediator complex, a coactivator involved in the regulated transcription of nearly all RNA polymerase II-dependent genes. Mediator functions as a bridge to convey information from gene-specific regulatory proteins to the basal RNA polymerase II transcription machinery. Mediator is recruited to promoters by direct interactions with regulatory proteins and serves as a scaffold for the assembly of a functional preinitiation complex with RNA polymerase II and the general transcription factors. The polypeptide is Mediator of RNA polymerase II transcription subunit 18 (SRB5) (Debaryomyces hansenii (strain ATCC 36239 / CBS 767 / BCRC 21394 / JCM 1990 / NBRC 0083 / IGC 2968) (Yeast)).